The chain runs to 40 residues: Photosystem II reaction center protein T (40 aa).

The chain crosses the membrane as a helical span at residues 3–23 (ALVYTFLLVGTLGIIFFAIFF).

The protein belongs to the PsbT family. PSII is composed of 1 copy each of membrane proteins PsbA, PsbB, PsbC, PsbD, PsbE, PsbF, PsbH, PsbI, PsbJ, PsbK, PsbL, PsbM, PsbT, PsbY, PsbZ, Psb30/Ycf12, at least 3 peripheral proteins of the oxygen-evolving complex and a large number of cofactors. It forms dimeric complexes.

The protein resides in the plastid. It is found in the chloroplast thylakoid membrane. Its function is as follows. Found at the monomer-monomer interface of the photosystem II (PS II) dimer, plays a role in assembly and dimerization of PSII. PSII is a light-driven water plastoquinone oxidoreductase, using light energy to abstract electrons from H(2)O, generating a proton gradient subsequently used for ATP formation. The polypeptide is Photosystem II reaction center protein T (Anthoceros angustus (Hornwort)).